The primary structure comprises 685 residues: E3 ubiquitin-protein ligase RNF103 (685 aa).

The next 4 helical transmembrane spans lie at 6-26 (FFLL…EAIV), 326-346 (LFVL…FITQ), 366-386 (LLII…LDSF), and 411-431 (MFYS…GLLI). Residues 526–543 (EEMSEGSQDTENDSESEN) show a composition bias toward acidic residues. Residues 526–550 (EEMSEGSQDTENDSESENTDTLSSE) are disordered. An RING-type zinc finger spans residues 621–663 (CVVCLENFENGCLLMGLPCGHVFHQNCIVMWLAGGRHCCPVCR).

Interacts with DERL1 and VCP. In terms of tissue distribution, highly expressed in the normal cerebellum but not in the cerebral cortex.

The protein localises to the endoplasmic reticulum membrane. The catalysed reaction is S-ubiquitinyl-[E2 ubiquitin-conjugating enzyme]-L-cysteine + [acceptor protein]-L-lysine = [E2 ubiquitin-conjugating enzyme]-L-cysteine + N(6)-ubiquitinyl-[acceptor protein]-L-lysine.. It functions in the pathway protein modification; protein ubiquitination. Acts as an E2-dependent E3 ubiquitin-protein ligase, probably involved in the ER-associated protein degradation pathway. In Homo sapiens (Human), this protein is E3 ubiquitin-protein ligase RNF103 (RNF103).